Consider the following 93-residue polypeptide: MSINELESEQKDWALSMLCRSGVLSPCRHHEGVYVDEGIDIESAYKYSMKVYKSNEDKSPFCNVREMTDTVQNYYHEYGGNDTCPLCTKHIDD.

The protein is Protein ea8.5 (ea8.5) of Escherichia phage lambda (Bacteriophage lambda).